The primary structure comprises 426 residues: Phosphomethylpyrimidine synthase (426 aa).

Substrate is bound by residues N65, M94, Y123, H162, 184–186 (SRG), 225–228 (DGMR), and E264. H268 is a binding site for Zn(2+). Position 291 (Y291) interacts with substrate. A Zn(2+)-binding site is contributed by H332. C408, C411, and C415 together coordinate [4Fe-4S] cluster.

It belongs to the ThiC family. [4Fe-4S] cluster serves as cofactor.

It catalyses the reaction 5-amino-1-(5-phospho-beta-D-ribosyl)imidazole + S-adenosyl-L-methionine = 4-amino-2-methyl-5-(phosphooxymethyl)pyrimidine + CO + 5'-deoxyadenosine + formate + L-methionine + 3 H(+). Its pathway is cofactor biosynthesis; thiamine diphosphate biosynthesis. Functionally, catalyzes the synthesis of the hydroxymethylpyrimidine phosphate (HMP-P) moiety of thiamine from aminoimidazole ribotide (AIR) in a radical S-adenosyl-L-methionine (SAM)-dependent reaction. In Methanococcus maripaludis (strain C5 / ATCC BAA-1333), this protein is Phosphomethylpyrimidine synthase.